The following is a 668-amino-acid chain: Bestrophin-3 (668 aa).

Residues 1-31 (MTVTYSSKVANATFFGFHRLLLKWRGSIYKL) are Cytoplasmic-facing. Ala10 serves as a coordination point for Ca(2+). A helical membrane pass occupies residues 32-51 (LYREFIVFAVLYTAISLVYR). At 52–60 (LLLTGVQKR) the chain is on the extracellular side. The helical transmembrane segment at 61–82 (YFEKLSIYCDRYAEQIPVTFVL) threads the bilayer. Residues 83–237 (GFYVTLVVNR…DWVGIPLVYT (155 aa)) are Cytoplasmic-facing. Residues 238–255 (QVVTLAVYTFFFACLIGR) form a helical membrane-spanning segment. At 256–274 (QFLDPTKGYAGHDLDLYIP) the chain is on the extracellular side. The helical transmembrane segment at 275-288 (IFTLLQFFFYAGWL) threads the bilayer. At 289–668 (KVAEQLINPF…LNKETEESPK (380 aa)) the chain is on the cytoplasmic side. The Ca(2+) site is built by Gln293, Asn296, Asp301, and Asp304. Disordered regions lie at residues 400–454 (SAHE…KKSC), 473–493 (RETSQTSTLQSLTPQSSVRTS), and 532–570 (TGVQPSKTEQQQGPMGSILSPSEKETPPGGPSPQTVSAS). Over residues 425–436 (PRDDLSPARDLL) the composition is skewed to basic and acidic residues. Positions 475-489 (TSQTSTLQSLTPQSS) are enriched in low complexity. Over residues 532–545 (TGVQPSKTEQQQGP) the composition is skewed to polar residues.

Belongs to the anion channel-forming bestrophin (TC 1.A.46) family. Calcium-sensitive chloride channel subfamily. In terms of tissue distribution, present in skeletal muscle and weakly in brain, spinal cord, bone marrow and retina.

Its subcellular location is the cell membrane. The enzyme catalyses chloride(in) = chloride(out). Functionally, ligand-gated anion channel that allows the movement of chloride monoatomic anions across cell membranes when activated by calcium (Ca2+). The chain is Bestrophin-3 from Homo sapiens (Human).